We begin with the raw amino-acid sequence, 208 residues long: Uracil phosphoribosyltransferase (208 aa).

Residues Arg-78, Arg-103, and 130–138 contribute to the 5-phospho-alpha-D-ribose 1-diphosphate site; that span reads DPMLATGGS. Uracil is bound by residues Ile-193 and 198-200; that span reads GDA. Residue Asp-199 participates in 5-phospho-alpha-D-ribose 1-diphosphate binding.

This sequence belongs to the UPRTase family. It depends on Mg(2+) as a cofactor.

The catalysed reaction is UMP + diphosphate = 5-phospho-alpha-D-ribose 1-diphosphate + uracil. It functions in the pathway pyrimidine metabolism; UMP biosynthesis via salvage pathway; UMP from uracil: step 1/1. Its activity is regulated as follows. Allosterically activated by GTP. Catalyzes the conversion of uracil and 5-phospho-alpha-D-ribose 1-diphosphate (PRPP) to UMP and diphosphate. The sequence is that of Uracil phosphoribosyltransferase from Shewanella frigidimarina (strain NCIMB 400).